Here is a 233-residue protein sequence, read N- to C-terminus: Ribonuclease 3 (233 aa).

The region spanning 6-135 (QDYLAKEFNI…FIGALYLDQG (130 aa)) is the RNase III domain. Glutamate 48 is a Mg(2+) binding site. Aspartate 52 is a catalytic residue. Aspartate 121 and glutamate 124 together coordinate Mg(2+). Residue glutamate 124 is part of the active site. Positions 161–230 (DAKTSLQEFL…AQQALDNMRN (70 aa)) constitute a DRBM domain. The tract at residues 205-233 (IGEGKGSSKKHAEMQAAQQALDNMRNKNK) is disordered.

This sequence belongs to the ribonuclease III family. Homodimer. Requires Mg(2+) as cofactor.

It is found in the cytoplasm. It catalyses the reaction Endonucleolytic cleavage to 5'-phosphomonoester.. In terms of biological role, digests double-stranded RNA. Involved in the processing of primary rRNA transcript to yield the immediate precursors to the large and small rRNAs (23S and 16S). Processes some mRNAs, and tRNAs when they are encoded in the rRNA operon. Processes pre-crRNA and tracrRNA of type II CRISPR loci if present in the organism. The chain is Ribonuclease 3 from Limosilactobacillus reuteri (strain DSM 20016) (Lactobacillus reuteri).